The sequence spans 434 residues: ATP-dependent protease ATPase subunit HslU (434 aa).

ATP is bound by residues I18, 60-65 (GVGKTE), D247, E312, and R384.

The protein belongs to the ClpX chaperone family. HslU subfamily. In terms of assembly, a double ring-shaped homohexamer of HslV is capped on each side by a ring-shaped HslU homohexamer. The assembly of the HslU/HslV complex is dependent on binding of ATP.

The protein resides in the cytoplasm. ATPase subunit of a proteasome-like degradation complex; this subunit has chaperone activity. The binding of ATP and its subsequent hydrolysis by HslU are essential for unfolding of protein substrates subsequently hydrolyzed by HslV. HslU recognizes the N-terminal part of its protein substrates and unfolds these before they are guided to HslV for hydrolysis. The sequence is that of ATP-dependent protease ATPase subunit HslU from Brucella anthropi (strain ATCC 49188 / DSM 6882 / CCUG 24695 / JCM 21032 / LMG 3331 / NBRC 15819 / NCTC 12168 / Alc 37) (Ochrobactrum anthropi).